Consider the following 1378-residue polypeptide: DNA-directed RNA polymerase subunit beta (1378 aa).

Belongs to the RNA polymerase beta chain family. The RNAP catalytic core consists of 2 alpha, 1 beta, 1 beta' and 1 omega subunit. When a sigma factor is associated with the core the holoenzyme is formed, which can initiate transcription.

It catalyses the reaction RNA(n) + a ribonucleoside 5'-triphosphate = RNA(n+1) + diphosphate. Functionally, DNA-dependent RNA polymerase catalyzes the transcription of DNA into RNA using the four ribonucleoside triphosphates as substrates. This Roseobacter denitrificans (strain ATCC 33942 / OCh 114) (Erythrobacter sp. (strain OCh 114)) protein is DNA-directed RNA polymerase subunit beta.